The chain runs to 897 residues: Isoleucine--tRNA ligase (897 aa).

A 'HIGH' region motif is present at residues 59–69 (PYANGDIHVGH). Glutamate 552 is an L-isoleucyl-5'-AMP binding site. Positions 593–597 (KMSKS) match the 'KMSKS' region motif. Lysine 596 is an ATP binding site. Zn(2+) is bound by residues cysteine 872, cysteine 875, cysteine 890, and cysteine 893.

It belongs to the class-I aminoacyl-tRNA synthetase family. IleS type 1 subfamily. In terms of assembly, monomer. It depends on Zn(2+) as a cofactor.

It is found in the cytoplasm. The enzyme catalyses tRNA(Ile) + L-isoleucine + ATP = L-isoleucyl-tRNA(Ile) + AMP + diphosphate. Its function is as follows. Catalyzes the attachment of isoleucine to tRNA(Ile). As IleRS can inadvertently accommodate and process structurally similar amino acids such as valine, to avoid such errors it has two additional distinct tRNA(Ile)-dependent editing activities. One activity is designated as 'pretransfer' editing and involves the hydrolysis of activated Val-AMP. The other activity is designated 'posttransfer' editing and involves deacylation of mischarged Val-tRNA(Ile). This chain is Isoleucine--tRNA ligase, found in Mycoplasmoides gallisepticum (strain R(low / passage 15 / clone 2)) (Mycoplasma gallisepticum).